Consider the following 696-residue polypeptide: Glutamate-rich protein 6B (696 aa).

Over residues 1 to 10 (MSAENNQLSG) the composition is skewed to polar residues. Residues 1–105 (MSAENNQLSG…EYLEKAGYLE (105 aa)) are disordered. 2 stretches are compositionally biased toward acidic residues: residues 32 to 44 (EDTE…ESLQ) and 54 to 72 (ESLE…EEEE). Positions 73–91 (YLGKEEYLKEEEYLGKEEH) are enriched in basic and acidic residues.

The protein belongs to the ERICH6 family.

This is Glutamate-rich protein 6B (ERICH6B) from Homo sapiens (Human).